Reading from the N-terminus, the 816-residue chain is Larval serum protein 1 alpha chain (816 aa).

The signal sequence occupies residues 1 to 16; it reads MKFAIAFLACVAVVTA.

The protein belongs to the hemocyanin family. Heterohexamer, composed of three subunits, alpha, beta and gamma. In terms of tissue distribution, larval hemolymph.

It is found in the secreted. Its subcellular location is the extracellular space. In terms of biological role, larval storage protein (LSP) which may serve as a store of amino acids for synthesis of adult proteins. This is Larval serum protein 1 alpha chain (Lsp1alpha) from Drosophila melanogaster (Fruit fly).